A 308-amino-acid polypeptide reads, in one-letter code: Glutaminase (308 aa).

Substrate contacts are provided by Ser-66, Asn-117, Glu-161, Asn-168, Tyr-192, Tyr-244, and Val-262.

The protein belongs to the glutaminase family. Homotetramer.

The enzyme catalyses L-glutamine + H2O = L-glutamate + NH4(+). This Salmonella heidelberg (strain SL476) protein is Glutaminase.